Here is a 218-residue protein sequence, read N- to C-terminus: Uracil-DNA glycosylase (218 aa).

Aspartate 60 functions as the Proton acceptor in the catalytic mechanism.

Belongs to the uracil-DNA glycosylase (UDG) superfamily. UNG family.

It localises to the cytoplasm. The enzyme catalyses Hydrolyzes single-stranded DNA or mismatched double-stranded DNA and polynucleotides, releasing free uracil.. Excises uracil residues from the DNA which can arise as a result of misincorporation of dUMP residues by DNA polymerase or due to deamination of cytosine. This Shewanella oneidensis (strain ATCC 700550 / JCM 31522 / CIP 106686 / LMG 19005 / NCIMB 14063 / MR-1) protein is Uracil-DNA glycosylase.